Reading from the N-terminus, the 174-residue chain is MIIVIIMPKNENNPNIKNNNHQSPKKRIALTAGTFDLLHPGHFNTLNFAKKHADELVVVLARDETVKRIKGRRPVIPEEQRKIMIETLKPVDKAILGSLTDKLEPILSVKPDIIVLGPDQTTYQLEELKNQLLERGFKTEIVKVEEYVKCPFHSSYDILKEIIRRWCNKEIELK.

ATP-binding positions include 34–35 (TF), 39–42 (HPGH), Asp-119, and Tyr-147.

It belongs to the archaeal FAD synthase family. As to quaternary structure, homodimer. A divalent metal cation serves as cofactor.

The enzyme catalyses FMN + ATP + H(+) = FAD + diphosphate. It functions in the pathway cofactor biosynthesis; FAD biosynthesis; FAD from FMN: step 1/1. Its function is as follows. Catalyzes the transfer of the AMP portion of ATP to flavin mononucleotide (FMN) to produce flavin adenine dinucleotide (FAD) coenzyme. The chain is FAD synthase from Methanococcus voltae (strain ATCC BAA-1334 / A3).